A 253-amino-acid chain; its full sequence is Chloride intracellular channel protein 4 (253 aa).

At Ala2 the chain carries N-acetylalanine. Residues 2-101 (ALSMPLNGLK…EEFLEEVLCP (100 aa)) form a required for insertion into the membrane region. Position 4 is a phosphoserine (Ser4). Lys24 bears the N6-acetyllysine mark. The G-site signature appears at 35 to 38 (CPFS). The helical transmembrane segment at 37 to 57 (FSQRLFMILWLKGVVFSVTTV) threads the bilayer. A GST C-terminal domain is found at 81 to 244 (NSEVKTDVNK…PSDKEVEIAY (164 aa)). Lys130 bears the N6-acetyllysine mark. A phosphoserine mark is found at Ser132, Ser167, and Ser236. The residue at position 244 (Tyr244) is a Phosphotyrosine.

The protein belongs to the chloride channel CLIC family. In terms of assembly, monomer. Interacts with HRH3. In terms of tissue distribution, detected in brain, in cell bodies and dendrites of Purkinje cells in cerebellar neurons (at protein level). Expressed neonatal and adult cardiomyocytes (at protein level). Marked expression was found in hippocampus and cerebellum, and in many other tissues.

It is found in the cytoplasm. It localises to the cytoskeleton. Its subcellular location is the microtubule organizing center. The protein localises to the centrosome. The protein resides in the cytoplasmic vesicle membrane. It is found in the nucleus. It localises to the cell membrane. Its subcellular location is the mitochondrion. The protein localises to the cell junction. The protein resides in the endoplasmic reticulum membrane. It carries out the reaction chloride(in) = chloride(out). It catalyses the reaction thiocyanate(in) = thiocyanate(out). The catalysed reaction is nitrate(in) = nitrate(out). The enzyme catalyses iodide(out) = iodide(in). It carries out the reaction bromide(in) = bromide(out). It catalyses the reaction fluoride(in) = fluoride(out). The catalysed reaction is choline(out) = choline(in). With respect to regulation, channel activity is redox- and pH-regulated. Anion vs cation selectivity is enhanced when fully oxidized. In terms of biological role, in the soluble state, catalyzes glutaredoxin-like thiol disulfide exchange reactions with reduced glutathione as electron donor. Can insert into membranes and form voltage-dependent multi-ion conductive channels. Membrane insertion seems to be redox-regulated and may occur only under oxidizing conditions. Has alternate cellular functions like a potential role in angiogenesis or in maintaining apical-basolateral membrane polarity during mitosis and cytokinesis. Could also promote endothelial cell proliferation and regulate endothelial morphogenesis (tubulogenesis). Promotes cell-surface expression of HRH3. The chain is Chloride intracellular channel protein 4 (Clic4) from Rattus norvegicus (Rat).